Here is a 327-residue protein sequence, read N- to C-terminus: Methionyl-tRNA formyltransferase (327 aa).

Residue 121-124 (SLLP) participates in (6S)-5,6,7,8-tetrahydrofolate binding.

This sequence belongs to the Fmt family.

It catalyses the reaction L-methionyl-tRNA(fMet) + (6R)-10-formyltetrahydrofolate = N-formyl-L-methionyl-tRNA(fMet) + (6S)-5,6,7,8-tetrahydrofolate + H(+). Functionally, attaches a formyl group to the free amino group of methionyl-tRNA(fMet). The formyl group appears to play a dual role in the initiator identity of N-formylmethionyl-tRNA by promoting its recognition by IF2 and preventing the misappropriation of this tRNA by the elongation apparatus. The sequence is that of Methionyl-tRNA formyltransferase from Burkholderia pseudomallei (strain 1106a).